The chain runs to 79 residues: Sec-independent protein translocase protein TatA (79 aa).

A helical transmembrane segment spans residues 1-21; sequence MGGISIWQLLIIALIVILLFG. The interval 42 to 79 is disordered; sequence AMTSETSEEEKKALEDSQTAQTSQQAEKKPESKDKEQA. Polar residues predominate over residues 57-66; it reads DSQTAQTSQQ. The segment covering 67 to 79 has biased composition (basic and acidic residues); sequence AEKKPESKDKEQA.

This sequence belongs to the TatA/E family. The Tat system comprises two distinct complexes: a TatABC complex, containing multiple copies of TatA, TatB and TatC subunits, and a separate TatA complex, containing only TatA subunits. Substrates initially bind to the TatABC complex, which probably triggers association of the separate TatA complex to form the active translocon.

Its subcellular location is the cell inner membrane. Part of the twin-arginine translocation (Tat) system that transports large folded proteins containing a characteristic twin-arginine motif in their signal peptide across membranes. TatA could form the protein-conducting channel of the Tat system. The protein is Sec-independent protein translocase protein TatA of Shewanella denitrificans (strain OS217 / ATCC BAA-1090 / DSM 15013).